The following is a 267-amino-acid chain: Hydroxyethylthiazole kinase 2 (267 aa).

Methionine 41 is a binding site for substrate. 2 residues coordinate ATP: lysine 116 and threonine 166. Glycine 193 contributes to the substrate binding site.

This sequence belongs to the Thz kinase family. The cofactor is Mg(2+).

It catalyses the reaction 5-(2-hydroxyethyl)-4-methylthiazole + ATP = 4-methyl-5-(2-phosphooxyethyl)-thiazole + ADP + H(+). The protein operates within cofactor biosynthesis; thiamine diphosphate biosynthesis; 4-methyl-5-(2-phosphoethyl)-thiazole from 5-(2-hydroxyethyl)-4-methylthiazole: step 1/1. Catalyzes the phosphorylation of the hydroxyl group of 4-methyl-5-beta-hydroxyethylthiazole (THZ). This is Hydroxyethylthiazole kinase 2 from Streptococcus pneumoniae (strain Taiwan19F-14).